The following is a 250-amino-acid chain: Ribosomal RNA small subunit methyltransferase J (250 aa).

Residues 96–97 (RD) and aspartate 168 each bind S-adenosyl-L-methionine.

The protein belongs to the methyltransferase superfamily. RsmJ family.

The protein localises to the cytoplasm. The catalysed reaction is guanosine(1516) in 16S rRNA + S-adenosyl-L-methionine = N(2)-methylguanosine(1516) in 16S rRNA + S-adenosyl-L-homocysteine + H(+). In terms of biological role, specifically methylates the guanosine in position 1516 of 16S rRNA. The polypeptide is Ribosomal RNA small subunit methyltransferase J (Neisseria meningitidis serogroup C (strain 053442)).